Reading from the N-terminus, the 61-residue chain is Sperm protamine P1 (61 aa).

Residues 1–61 are disordered; sequence MARYRHSRSR…RYSRRRRRRY (61 aa).

The protein belongs to the protamine P1 family. Testis.

The protein localises to the nucleus. The protein resides in the chromosome. Protamines substitute for histones in the chromatin of sperm during the haploid phase of spermatogenesis. They compact sperm DNA into a highly condensed, stable and inactive complex. The chain is Sperm protamine P1 (PRM1) from Onychogalea fraenata (Bridled nail-tailed wallaby).